Here is a 94-residue protein sequence, read N- to C-terminus: Aspartyl/glutamyl-tRNA(Asn/Gln) amidotransferase subunit C (94 aa).

It belongs to the GatC family. Heterotrimer of A, B and C subunits.

It catalyses the reaction L-glutamyl-tRNA(Gln) + L-glutamine + ATP + H2O = L-glutaminyl-tRNA(Gln) + L-glutamate + ADP + phosphate + H(+). The enzyme catalyses L-aspartyl-tRNA(Asn) + L-glutamine + ATP + H2O = L-asparaginyl-tRNA(Asn) + L-glutamate + ADP + phosphate + 2 H(+). Allows the formation of correctly charged Asn-tRNA(Asn) or Gln-tRNA(Gln) through the transamidation of misacylated Asp-tRNA(Asn) or Glu-tRNA(Gln) in organisms which lack either or both of asparaginyl-tRNA or glutaminyl-tRNA synthetases. The reaction takes place in the presence of glutamine and ATP through an activated phospho-Asp-tRNA(Asn) or phospho-Glu-tRNA(Gln). This chain is Aspartyl/glutamyl-tRNA(Asn/Gln) amidotransferase subunit C, found in Caldicellulosiruptor saccharolyticus (strain ATCC 43494 / DSM 8903 / Tp8T 6331).